The primary structure comprises 189 residues: Peptidyl-tRNA hydrolase (189 aa).

Residue Tyr14 participates in tRNA binding. Catalysis depends on His19, which acts as the Proton acceptor. TRNA is bound by residues Tyr64, Asn66, and Asn112.

Belongs to the PTH family. As to quaternary structure, monomer.

Its subcellular location is the cytoplasm. The catalysed reaction is an N-acyl-L-alpha-aminoacyl-tRNA + H2O = an N-acyl-L-amino acid + a tRNA + H(+). Its function is as follows. Hydrolyzes ribosome-free peptidyl-tRNAs (with 1 or more amino acids incorporated), which drop off the ribosome during protein synthesis, or as a result of ribosome stalling. Functionally, catalyzes the release of premature peptidyl moieties from peptidyl-tRNA molecules trapped in stalled 50S ribosomal subunits, and thus maintains levels of free tRNAs and 50S ribosomes. The chain is Peptidyl-tRNA hydrolase from Clostridium botulinum (strain 657 / Type Ba4).